A 171-amino-acid chain; its full sequence is RNA silencing suppressor p19 (171 aa).

Residues 1–15 (MERAIPGNDTREPAY) show a composition bias toward basic and acidic residues. A disordered region spans residues 1–32 (MERAIPGNDTREPAYGERWNGGPGGSTSPFQL).

The protein belongs to the tombusvirus protein p19 family. As to quaternary structure, homodimer.

In terms of biological role, viral suppressor of RNA silencing which binds specifically to silencing RNAs (siRNAs). Acts as a molecular caliper to specifically select siRNAs based on the length of the duplex region of the RNA. The sequence is that of RNA silencing suppressor p19 from Capsicum annuum (Capsicum pepper).